Consider the following 712-residue polypeptide: Ribosomal RNA large subunit methyltransferase K/L (712 aa).

Positions 42–153 (QALRIVMWSR…KGRASLSIDL (112 aa)) constitute a THUMP domain.

The protein belongs to the methyltransferase superfamily. RlmKL family.

The protein localises to the cytoplasm. The enzyme catalyses guanosine(2445) in 23S rRNA + S-adenosyl-L-methionine = N(2)-methylguanosine(2445) in 23S rRNA + S-adenosyl-L-homocysteine + H(+). It carries out the reaction guanosine(2069) in 23S rRNA + S-adenosyl-L-methionine = N(2)-methylguanosine(2069) in 23S rRNA + S-adenosyl-L-homocysteine + H(+). Specifically methylates the guanine in position 2445 (m2G2445) and the guanine in position 2069 (m7G2069) of 23S rRNA. This chain is Ribosomal RNA large subunit methyltransferase K/L, found in Stenotrophomonas maltophilia (strain K279a).